A 153-amino-acid polypeptide reads, in one-letter code: Natriuretic peptides A (153 aa).

A signal peptide spans 1 to 25 (MGSFSTITASFLLFLACQLLWQTGA). 2 consecutive propeptides follow at residues 26–123 (NPVY…AAPR) and 93–103 (DGGALGRGSWD). Residues 62 to 104 (VLSEQNEEAGAALSPLPEVPPWAGEVNPAQRDGGALGRGSWDS) are disordered. Ser129 is modified (phosphoserine). A disulfide bond links Cys130 and Cys146. The segment at 147 to 151 (NSFRY) is important for degradation of atrial natriuretic peptide by IDE.

The protein belongs to the natriuretic peptide family. As to quaternary structure, homodimer; disulfide-linked antiparallel dimer. The precursor molecule is proteolytically cleaved by CORIN at Arg-123 to produce the atrial natriuretic peptide. Undergoes further proteolytic cleavage by unknown proteases to give rise to long-acting natriuretic peptide, vessel dilator and kaliuretic peptide. Additional processing gives rise to the auriculin and atriopeptin peptides. In the kidneys, alternative processing by an unknown protease results in the peptide urodilatin. Post-translationally, cleavage by MME initiates degradation of the factor and thereby regulates its activity. Degradation by IDE results in reduced activation of NPR1 (in vitro). During IDE degradation, the resulting products can temporarily stimulate NPR2 to produce cGMP, before the fragments are completely degraded and inactivated by IDE (in vitro). In terms of processing, degraded by IDE. Phosphorylation on Ser-129 decreases vasorelaxant activity.

It is found in the secreted. It localises to the perikaryon. The protein resides in the cell projection. Its function is as follows. Hormone that plays a key role in mediating cardio-renal homeostasis, and is involved in vascular remodeling and regulating energy metabolism. Acts by specifically binding and stimulating NPR1 to produce cGMP, which in turn activates effector proteins, such as PRKG1, that drive various biological responses. Regulates vasodilation, natriuresis, diuresis and aldosterone synthesis and is therefore essential for regulating blood pressure, controlling the extracellular fluid volume and maintaining the fluid-electrolyte balance. Also involved in inhibiting cardiac remodeling and cardiac hypertrophy by inducing cardiomyocyte apoptosis and attenuating the growth of cardiomyocytes and fibroblasts. Plays a role in female pregnancy by promoting trophoblast invasion and spiral artery remodeling in uterus, and thus prevents pregnancy-induced hypertension. In adipose tissue, acts in various cGMP- and PKG-dependent pathways to regulate lipid metabolism and energy homeostasis. This includes up-regulating lipid metabolism and mitochondrial oxygen utilization by activating the AMP-activated protein kinase (AMPK), and increasing energy expenditure by acting via MAPK11 to promote the UCP1-dependent thermogenesis of brown adipose tissue. Binds the clearance receptor NPR3 which removes the hormone from circulation. May have a role in cardio-renal homeostasis through regulation of natriuresis, diuresis, vasodilation, and inhibiting aldosterone synthesis. In vitro, promotes the production of cGMP and induces vasodilation. May promote natriuresis, at least in part, by enhancing prostaglandin E2 synthesis resulting in the inhibition of renal Na+-K+-ATPase. However reports on the involvement of this peptide in mammal blood volume and blood pressure homeostasis are conflicting; according to a report, in vivo it is not sufficient to activate cGMP and does not inhibit collecting duct transport nor effect diuresis and natriuresis. Appears to bind to specific receptors that are distinct from the receptors bound by atrial natriuretic peptide and vessel dilator. Possibly enhances protein excretion in urine by decreasing proximal tubular protein reabsorption. In terms of biological role, may have a role in cardio-renal homeostasis through regulation of natriuresis, diuresis, and vasodilation. In vitro, promotes the production of cGMP and induces vasodilation. May promote natriuresis, at least in part, by enhancing prostaglandin E2 synthesis resulting in the inhibition of renal Na+-K+-ATPase. However reports on the involvement of this peptide in mammal blood volume and blood pressure homeostasis are conflicting; according to a report it is not sufficient to activate cGMP and does not inhibit collecting duct transport nor effect diuresis and natriuresis. Appears to bind to specific receptors that are distinct from the receptors bound by the atrial natriuretic and long-acting natriuretic peptides. Possibly functions in protein excretion in urine by maintaining the integrity of the proximal tubules and enhancing protein excretion by decreasing proximal tubular protein reabsorption. Functionally, may have a role in cardio-renal homeostasis through regulation of diuresis and inhibiting aldosterone synthesis. In vitro, promotes the production of cGMP and induces vasodilation. May promote natriuresis, at least in part, by enhancing prostaglandin E2 synthesis resulting in the inhibition of renal Na+-K+-ATPase. May have a role in potassium excretion but not sodium excretion (natriuresis). Possibly enhances protein excretion in urine by decreasing proximal tubular protein reabsorption. Its function is as follows. Hormone produced in the kidneys that appears to be important for maintaining cardio-renal homeostasis. Mediates vasodilation, natriuresis and diuresis primarily in the renal system, in order to maintain the extracellular fluid volume and control the fluid-electrolyte balance. Specifically binds and stimulates cGMP production by renal transmembrane receptors, likely NPR1. Urodilatin not ANP, may be the natriuretic peptide responsible for the regulation of sodium and water homeostasis in the kidney. May have a role in cardio-renal homeostasis through regulation of natriuresis and vasodilation. In vivo promotes natriuresis and in vitro, vasodilates renal artery strips. In terms of biological role, may have a role in cardio-renal homeostasis through regulation of regulation of natriuresis and vasodilation. In vivo promotes natriuresis. In vitro, vasodilates intestinal smooth muscle but not smooth muscle strips. Functionally, may have a role in cardio-renal homeostasis through regulation of natriuresis and vasodilation. In vivo promotes natriuresis. In vitro, selectively vasodilates intestinal and vascular smooth muscle strips. Its function is as follows. May have a role in cardio-renal homeostasis through regulation of natriuresis and vasodilation. In vivo promotes natriuresis. In vitro, selectively vasodilates intestinal smooth muscle but not vascular smooth muscle strips. The sequence is that of Natriuretic peptides A (NPPA) from Felis catus (Cat).